The primary structure comprises 28 residues: GIMDSVKGLAKNLAGKLLDSLKCKITGC.

A disulfide bond links C23 and C28.

As to expression, expressed by the skin glands.

The protein resides in the secreted. Functionally, antibacterial activity against Gram-negative bacterium E.coli. Very weak hemolysis activity. This is Ranatuerin-2BYb from Rana boylii (Foothill yellow-legged frog).